The sequence spans 56 residues: Large ribosomal subunit protein bL33 (56 aa).

This sequence belongs to the bacterial ribosomal protein bL33 family.

This chain is Large ribosomal subunit protein bL33, found in Beutenbergia cavernae (strain ATCC BAA-8 / DSM 12333 / CCUG 43141 / JCM 11478 / NBRC 16432 / NCIMB 13614 / HKI 0122).